Here is a 92-residue protein sequence, read N- to C-terminus: Small ribosomal subunit protein uS19c (92 aa).

It belongs to the universal ribosomal protein uS19 family.

It is found in the plastid. The protein localises to the chloroplast. Its function is as follows. Protein S19 forms a complex with S13 that binds strongly to the 16S ribosomal RNA. The protein is Small ribosomal subunit protein uS19c (rps19) of Trieres chinensis (Marine centric diatom).